The primary structure comprises 134 residues: Holo-[acyl-carrier-protein] synthase (134 aa).

The Mg(2+) site is built by D8 and E57.

This sequence belongs to the P-Pant transferase superfamily. AcpS family. Mg(2+) serves as cofactor.

It localises to the cytoplasm. It catalyses the reaction apo-[ACP] + CoA = holo-[ACP] + adenosine 3',5'-bisphosphate + H(+). Its function is as follows. Transfers the 4'-phosphopantetheine moiety from coenzyme A to a Ser of acyl-carrier-protein. This is Holo-[acyl-carrier-protein] synthase from Rhizobium leguminosarum bv. trifolii (strain WSM2304).